The chain runs to 461 residues: ATP-dependent protease ATPase subunit HslU (461 aa).

ATP contacts are provided by residues isoleucine 18, 60–65 (GVGKTE), aspartate 274, glutamate 339, and arginine 411.

Belongs to the ClpX chaperone family. HslU subfamily. As to quaternary structure, a double ring-shaped homohexamer of HslV is capped on each side by a ring-shaped HslU homohexamer. The assembly of the HslU/HslV complex is dependent on binding of ATP.

It localises to the cytoplasm. ATPase subunit of a proteasome-like degradation complex; this subunit has chaperone activity. The binding of ATP and its subsequent hydrolysis by HslU are essential for unfolding of protein substrates subsequently hydrolyzed by HslV. HslU recognizes the N-terminal part of its protein substrates and unfolds these before they are guided to HslV for hydrolysis. In Carboxydothermus hydrogenoformans (strain ATCC BAA-161 / DSM 6008 / Z-2901), this protein is ATP-dependent protease ATPase subunit HslU.